The primary structure comprises 78 residues: MARVCQVTGKAPMVGNHVSHANNKTKRRFLPNLQNRRFWSEAENRWIRLRVSNAALRTIDKKGIDVVVAELRARGDKI.

This sequence belongs to the bacterial ribosomal protein bL28 family.

The chain is Large ribosomal subunit protein bL28 from Azoarcus sp. (strain BH72).